The primary structure comprises 138 residues: Nanos homolog 2 (138 aa).

The interval 31–55 is disordered; the sequence is ETQEIEEPSPGPPLGQDQGLGAPGA. Residues 62–116 form a Nanos-type zinc finger; the sequence is LCNFCKHNGESRHVYSSHQLKTPDGVVVCPILRHYVCPVCGATGDQAHTLKYCPL. Residues C63, C66, H79, C90, C98, C101, H109, and C114 each contribute to the Zn(2+) site. 2 consecutive short sequence motifs (C2HC) follow at residues 63 to 90 and 98 to 114; these read CNFC…VVVC and CPVC…LKYC.

It belongs to the nanos family. In terms of assembly, interacts with CNOT1, CNOT3, CNOT6L, CNOT7 and CNOT9. Testis and ovary. Expression found in several spermatogenic stages: in cells on the periphery of the tubules which could correspond to spermatogonia, in spermatocytes and in round spermatids (at protein level).

It localises to the cytoplasm. The protein localises to the P-body. Its subcellular location is the perinuclear region. In terms of biological role, plays a key role in the sexual differentiation of germ cells by promoting the male fate but suppressing the female fate. Represses the female fate pathways by suppressing meiosis, which in turn results in the promotion of the male fate. Maintains the suppression of meiosis by preventing STRA8 expression, which is required for premeiotic DNA replication, after CYP26B1 is decreased. Regulates the localization of the CCR4-NOT deadenylation complex to P-bodies and plays a role in recruiting the complex to trigger the degradation of mRNAs involved in meiosis. Required for the maintenance of the spermatogonial stem cell population. Not essential for the assembly of P-bodies but is required for the maintenance of their normal state. In Homo sapiens (Human), this protein is Nanos homolog 2 (NANOS2).